A 108-amino-acid polypeptide reads, in one-letter code: uncharacterized protein (108 aa).

The signal sequence occupies residues 1–22 (MMIKQCVICLSLLVFGTTAAHA).

This is an uncharacterized protein from Bacillus subtilis (strain 168).